We begin with the raw amino-acid sequence, 227 residues long: Thymidylate kinase (227 aa).

Position 7 to 14 (7 to 14 (GIEGSGKT)) interacts with ATP.

This sequence belongs to the thymidylate kinase family.

It catalyses the reaction dTMP + ATP = dTDP + ADP. Phosphorylation of dTMP to form dTDP in both de novo and salvage pathways of dTTP synthesis. The sequence is that of Thymidylate kinase from Desulforapulum autotrophicum (strain ATCC 43914 / DSM 3382 / VKM B-1955 / HRM2) (Desulfobacterium autotrophicum).